The following is a 323-amino-acid chain: Mycothiol acetyltransferase (323 aa).

N-acetyltransferase domains lie at 21–176 (ELLR…VSLR) and 173–323 (VSLR…LTKN). 1D-myo-inositol 2-(L-cysteinylamino)-2-deoxy-alpha-D-glucopyranoside is bound at residue glutamate 44. Residue 98–100 (LAV) participates in acetyl-CoA binding. 1D-myo-inositol 2-(L-cysteinylamino)-2-deoxy-alpha-D-glucopyranoside-binding residues include glutamate 200, lysine 240, and glutamate 253. Acetyl-CoA contacts are provided by residues 257–259 (VGV) and 264–270 (QGLGLGK). Tyrosine 291 serves as a coordination point for 1D-myo-inositol 2-(L-cysteinylamino)-2-deoxy-alpha-D-glucopyranoside.

The protein belongs to the acetyltransferase family. MshD subfamily. In terms of assembly, monomer.

It catalyses the reaction 1D-myo-inositol 2-(L-cysteinylamino)-2-deoxy-alpha-D-glucopyranoside + acetyl-CoA = mycothiol + CoA + H(+). In terms of biological role, catalyzes the transfer of acetyl from acetyl-CoA to desacetylmycothiol (Cys-GlcN-Ins) to form mycothiol. The polypeptide is Mycothiol acetyltransferase (Paenarthrobacter aurescens (strain TC1)).